Reading from the N-terminus, the 306-residue chain is Tyrosine recombinase XerD (306 aa).

The Core-binding (CB) domain maps to 1–83 (MGFIAQFLEM…TIKSYYEFLI (83 aa)). In terms of domain architecture, Tyr recombinase spans 104 to 299 (KLPEILSIAQ…QTNHLKKALL (196 aa)). Active-site residues include Arg145, Lys176, His251, Arg254, and His277. Catalysis depends on Tyr286, which acts as the O-(3'-phospho-DNA)-tyrosine intermediate.

This sequence belongs to the 'phage' integrase family. XerD subfamily. In terms of assembly, forms a cyclic heterotetrameric complex composed of two molecules of XerC and two molecules of XerD.

Its subcellular location is the cytoplasm. Its function is as follows. Site-specific tyrosine recombinase, which acts by catalyzing the cutting and rejoining of the recombining DNA molecules. The XerC-XerD complex is essential to convert dimers of the bacterial chromosome into monomers to permit their segregation at cell division. It also contributes to the segregational stability of plasmids. The sequence is that of Tyrosine recombinase XerD from Rickettsia conorii (strain ATCC VR-613 / Malish 7).